We begin with the raw amino-acid sequence, 198 residues long: Recombination protein RecR (198 aa).

The C4-type zinc-finger motif lies at 57–72 (CSVCNNITDLDPCHIC). Positions 80 to 175 (SIICVVQEPR…RVTRIAHGLP (96 aa)) constitute a Toprim domain.

This sequence belongs to the RecR family.

Its function is as follows. May play a role in DNA repair. It seems to be involved in an RecBC-independent recombinational process of DNA repair. It may act with RecF and RecO. The sequence is that of Recombination protein RecR from Brevibacillus brevis (strain 47 / JCM 6285 / NBRC 100599).